The following is a 417-amino-acid chain: Serine hydroxymethyltransferase (417 aa).

(6S)-5,6,7,8-tetrahydrofolate-binding positions include Leu119 and 123-125; that span reads GHL. An N6-(pyridoxal phosphate)lysine modification is found at Lys227.

This sequence belongs to the SHMT family. Homodimer. Pyridoxal 5'-phosphate is required as a cofactor.

The protein resides in the cytoplasm. The catalysed reaction is (6R)-5,10-methylene-5,6,7,8-tetrahydrofolate + glycine + H2O = (6S)-5,6,7,8-tetrahydrofolate + L-serine. The protein operates within one-carbon metabolism; tetrahydrofolate interconversion. It participates in amino-acid biosynthesis; glycine biosynthesis; glycine from L-serine: step 1/1. Functionally, catalyzes the reversible interconversion of serine and glycine with tetrahydrofolate (THF) serving as the one-carbon carrier. This reaction serves as the major source of one-carbon groups required for the biosynthesis of purines, thymidylate, methionine, and other important biomolecules. Also exhibits THF-independent aldolase activity toward beta-hydroxyamino acids, producing glycine and aldehydes, via a retro-aldol mechanism. The sequence is that of Serine hydroxymethyltransferase from Buchnera aphidicola subsp. Cinara cedri (strain Cc).